An 83-amino-acid chain; its full sequence is Normal mucosa of esophagus-specific gene 1 protein (83 aa).

Belongs to the complex I NDUFA4 subunit family. Strongly expressed in vertebrae, brain, intestine and stomach.

Its subcellular location is the nucleus. This is Normal mucosa of esophagus-specific gene 1 protein (Nmes1) from Mus musculus (Mouse).